The following is a 250-amino-acid chain: 5-oxoprolinase subunit A (250 aa).

The protein belongs to the LamB/PxpA family. In terms of assembly, forms a complex composed of PxpA, PxpB and PxpC.

The catalysed reaction is 5-oxo-L-proline + ATP + 2 H2O = L-glutamate + ADP + phosphate + H(+). In terms of biological role, catalyzes the cleavage of 5-oxoproline to form L-glutamate coupled to the hydrolysis of ATP to ADP and inorganic phosphate. In Staphylococcus aureus (strain Mu3 / ATCC 700698), this protein is 5-oxoprolinase subunit A.